The sequence spans 450 residues: Probable glycine dehydrogenase (decarboxylating) subunit 1 (450 aa).

It belongs to the GcvP family. N-terminal subunit subfamily. The glycine cleavage system is composed of four proteins: P, T, L and H. In this organism, the P 'protein' is a heterodimer of two subunits.

The catalysed reaction is N(6)-[(R)-lipoyl]-L-lysyl-[glycine-cleavage complex H protein] + glycine + H(+) = N(6)-[(R)-S(8)-aminomethyldihydrolipoyl]-L-lysyl-[glycine-cleavage complex H protein] + CO2. The glycine cleavage system catalyzes the degradation of glycine. The P protein binds the alpha-amino group of glycine through its pyridoxal phosphate cofactor; CO(2) is released and the remaining methylamine moiety is then transferred to the lipoamide cofactor of the H protein. The sequence is that of Probable glycine dehydrogenase (decarboxylating) subunit 1 from Desulfotalea psychrophila (strain LSv54 / DSM 12343).